A 157-amino-acid polypeptide reads, in one-letter code: DNA gyrase inhibitor (157 aa).

It belongs to the DNA gyrase inhibitor family. Interacts with DNA gyrase.

It is found in the cytoplasm. In terms of biological role, inhibits the supercoiling activity of DNA gyrase. Acts by inhibiting DNA gyrase at an early step, prior to (or at the step of) binding of DNA by the gyrase. It protects cells against toxins that target DNA gyrase, by inhibiting activity of these toxins and reducing the formation of lethal double-strand breaks in the cell. The protein is DNA gyrase inhibitor of Cronobacter sakazakii (strain ATCC BAA-894) (Enterobacter sakazakii).